Here is a 296-residue protein sequence, read N- to C-terminus: Small ribosomal subunit protein uS2m (296 aa).

The tract at residues 274 to 296 (QGQKEPGDQGPAHPPGADMSHSL) is disordered.

This sequence belongs to the universal ribosomal protein uS2 family. Component of the mitochondrial small ribosomal subunit (mt-SSU). Mature mammalian 55S mitochondrial ribosomes consist of a small (28S) and a large (39S) subunit. The 28S small subunit contains a 12S ribosomal RNA (12S mt-rRNA) and 30 different proteins. The 39S large subunit contains a 16S rRNA (16S mt-rRNA), a copy of mitochondrial valine transfer RNA (mt-tRNA(Val)), which plays an integral structural role, and 52 different proteins.

It localises to the mitochondrion. Required for mitoribosome formation and stability, and mitochondrial translation. This chain is Small ribosomal subunit protein uS2m (MRPS2), found in Homo sapiens (Human).